An 87-amino-acid polypeptide reads, in one-letter code: Selenoprotein W (87 aa).

A cross-link (cysteinyl-selenocysteine (Cys-Sec); redox-active) is located at residues 10-13; that stretch reads CGAU. Position 13 (U13) is a non-standard amino acid, selenocysteine. C37 is subject to S-glutathionyl cysteine.

It belongs to the SelWTH family. Selenoprotein W subfamily. As to quaternary structure, interacts with DPYSL2, PRDX1, YWHAB, YWHAG, HSP70 and HSP90. In terms of tissue distribution, highest levels detected in skeletal muscle, tongue, heart and brain. Expressed at significantly higher levels in female skeletal muscle than in male and at slightly higher levels in female cardiac muscle than in male (at protein level). Also detected at low levels in liver.

The protein localises to the cytoplasm. Plays a role as a glutathione (GSH)-dependent antioxidant. May be involved in a redox-related process. May play a role in the myopathies of selenium deficiency. In Macaca mulatta (Rhesus macaque), this protein is Selenoprotein W.